Consider the following 252-residue polypeptide: C-X-C motif chemokine 16 (252 aa).

The N-terminal stretch at 1-25 is a signal peptide; sequence MMLGRTSRLLLVLLFIAYATTSGNG. Topologically, residues 26-198 are extracellular; sequence NEGSKVGSCP…RGPQAGTSAT (173 aa). Intrachain disulfides connect Cys-34/Cys-64 and Cys-36/Cys-78. Disordered regions lie at residues 115-145 and 163-195; these read LPEPTEAAPSDTATTSQTYLPSTLQRTQQPT and TTTYTSGHSLGAEPEAKENQKQLKENRGPQAGT. Over residues 125–145 the composition is skewed to polar residues; sequence DTATTSQTYLPSTLQRTQQPT. Residues 176–189 are compositionally biased toward basic and acidic residues; that stretch reads PEAKENQKQLKENR. Residues 199–219 traverse the membrane as a helical segment; sequence VPVLSLLAIVFILAGVLLYVV. Topologically, residues 220–252 are cytoplasmic; sequence CKRRKNQLLQHPPDLAASLYTCSRRTRAENGTL.

The protein belongs to the intercrine alpha (chemokine CxC) family. In terms of processing, glycosylated.

The protein localises to the membrane. Its function is as follows. Induces a strong chemotactic response. Induces calcium mobilization. Binds to CXCR6/Bonzo. Also acts as a scavenger receptor on macrophages, which specifically binds to OxLDL (oxidized low density lipoprotein), suggesting that it may be involved in pathophysiology such as atherogenesis. The polypeptide is C-X-C motif chemokine 16 (CXCL16) (Bos taurus (Bovine)).